The chain runs to 88 residues: RNA-binding protein Hfq (88 aa).

In terms of domain architecture, Sm spans 9 to 68; that stretch reads DPYLNVLRKERVPVSIYLVNGIKLQGQVESFDQFVVLLKNTVSQMVYKHAISTVVPSRAV.

This sequence belongs to the Hfq family. As to quaternary structure, homohexamer.

Functionally, RNA chaperone that binds small regulatory RNA (sRNAs) and mRNAs to facilitate mRNA translational regulation in response to envelope stress, environmental stress and changes in metabolite concentrations. Also binds with high specificity to tRNAs. The protein is RNA-binding protein Hfq of Cellvibrio japonicus (strain Ueda107) (Pseudomonas fluorescens subsp. cellulosa).